Reading from the N-terminus, the 167-residue chain is Transmembrane protein 229B (167 aa).

Residues 1-14 (MASAEPLTALSRWY) lie on the Cytoplasmic side of the membrane. Residues 15–35 (LYAIHGYFCEVMFTAAWEFVV) form a helical membrane-spanning segment. The Extracellular portion of the chain corresponds to 36-40 (NLNWK). The helical transmembrane segment at 41–61 (FPGVTSVWALFIYGTSILIVE) threads the bilayer. Topologically, residues 62 to 73 (RMYLRLRGRCPL) are cytoplasmic. A helical membrane pass occupies residues 74-94 (LLRCLIYTLWTYLWEFTTGFI). Topologically, residues 95-109 (LRQFNACPWDYSQFD) are extracellular. A helical membrane pass occupies residues 110 to 130 (FDFMGLITLEYAVPWFCGALI). Over 131-167 (MEQFIIRNTLRLRFDKDAEPGEPSGALALANGHVKTD) the chain is Cytoplasmic.

It belongs to the TMEM229 family.

The protein resides in the membrane. This is Transmembrane protein 229B (TMEM229B) from Homo sapiens (Human).